Here is a 78-residue protein sequence, read N- to C-terminus: RNA-binding protein KhpA (78 aa).

Residues 29 to 78 (TIIYELTVAKGDIGKIIGKEGRTIKAIRTLLVSVASRDNVKVSLEIMEER) form the KH domain.

It belongs to the KhpA RNA-binding protein family.

The protein resides in the cytoplasm. Functionally, a probable RNA-binding protein. The polypeptide is RNA-binding protein KhpA (Chlamydia trachomatis serovar D (strain ATCC VR-885 / DSM 19411 / UW-3/Cx)).